Reading from the N-terminus, the 392-residue chain is Chaperone protein DnaJ (392 aa).

Positions 2-67 constitute a J domain; sequence DYYTILGVAK…QKRESYDRYG (66 aa). The CR-type zinc finger occupies 149–227; the sequence is GVEKELLVSG…CRGQGRIKDK (79 aa). Residues C162, C165, C179, C182, C201, C204, C215, and C218 each coordinate Zn(2+). 4 CXXCXGXG motif repeats span residues 162 to 169, 179 to 186, 201 to 208, and 215 to 222; these read CDACSGSG, CDRCKGSG, CPDCSGEG, and CSECRGQG.

The protein belongs to the DnaJ family. As to quaternary structure, homodimer. Zn(2+) serves as cofactor.

It localises to the cytoplasm. Functionally, participates actively in the response to hyperosmotic and heat shock by preventing the aggregation of stress-denatured proteins and by disaggregating proteins, also in an autonomous, DnaK-independent fashion. Unfolded proteins bind initially to DnaJ; upon interaction with the DnaJ-bound protein, DnaK hydrolyzes its bound ATP, resulting in the formation of a stable complex. GrpE releases ADP from DnaK; ATP binding to DnaK triggers the release of the substrate protein, thus completing the reaction cycle. Several rounds of ATP-dependent interactions between DnaJ, DnaK and GrpE are required for fully efficient folding. Also involved, together with DnaK and GrpE, in the DNA replication of plasmids through activation of initiation proteins. This is Chaperone protein DnaJ from Chlamydia muridarum (strain MoPn / Nigg).